The sequence spans 284 residues: Cytochrome P450 2C31 (284 aa).

Cys229 is a heme binding site.

The protein belongs to the cytochrome P450 family. Heme serves as cofactor.

The protein localises to the endoplasmic reticulum membrane. It localises to the microsome membrane. The catalysed reaction is an organic molecule + reduced [NADPH--hemoprotein reductase] + O2 = an alcohol + oxidized [NADPH--hemoprotein reductase] + H2O + H(+). In terms of biological role, cytochromes P450 are a group of heme-thiolate monooxygenases. In liver microsomes, this enzyme is involved in an NADPH-dependent electron transport pathway. It oxidizes a variety of structurally unrelated compounds, including steroids, fatty acids, and xenobiotics. The polypeptide is Cytochrome P450 2C31 (CYP2C31) (Capra hircus aegagrus (Wild goat)).